A 345-amino-acid polypeptide reads, in one-letter code: NADPH dehydrogenase (345 aa).

An FMN-binding site is contributed by 23–26 (SPMC). Substrate is bound at residue Tyr-28. The FMN site is built by Ala-60 and Gln-102. 164–167 (HGAH) provides a ligand contact to substrate. FMN-binding positions include Arg-215 and 307–308 (GR).

This sequence belongs to the NADH:flavin oxidoreductase/NADH oxidase family. NamA subfamily. Homotetramer. It depends on FMN as a cofactor.

It carries out the reaction A + NADPH + H(+) = AH2 + NADP(+). Functionally, catalyzes the reduction of the double bond of an array of alpha,beta-unsaturated aldehydes and ketones. It also reduces the nitro group of nitroester and nitroaromatic compounds. It could have a role in detoxification processes. This Bacillus anthracis (strain CDC 684 / NRRL 3495) protein is NADPH dehydrogenase.